The following is a 1262-amino-acid chain: Histone-lysine N-methyltransferase eggless (1262 aa).

A disordered region spans residues 1–194 (MSGQPTAVDC…MEVDQDVEES (194 aa)). 3 stretches are compositionally biased toward basic and acidic residues: residues 26 to 41 (ASRE…KGEN), 50 to 61 (AAKDVEIEELTH), and 81 to 99 (APDE…KGEN). The span at 157-166 (SSISSPTSES) shows a compositional bias: low complexity. Basic and acidic residues predominate over residues 167 to 179 (FPEKDEKTNKENE). Serine 215 carries the phosphoserine modification. Threonine 217 carries the phosphothreonine modification. Residues 353–420 (EKSDFSKNKL…LEKVQTTADK (68 aa)) are a coiled coil. Tudor domains lie at 529–602 (RLTI…SEKV) and 629–686 (QCTR…RETQ). Positions 743-764 (SSAATPAGGRTNAGGVSTSNSA) are disordered. The MBD domain maps to 818-884 (LDSYSPLAKP…DNFDFTPDLK (67 aa)). The region spanning 946–1018 (LCCDCEDDCS…NCLNRVVQFS (73 aa)) is the Pre-SET domain. Residues cysteine 948, cysteine 950, cysteine 954, cysteine 960, cysteine 962, cysteine 1000, cysteine 1004, cysteine 1006, and cysteine 1010 each coordinate Zn(2+). The SET domain maps to 1021 to 1237 (MKLQVFKTSN…SGTELTWNYN (217 aa)). Residues 1031–1033 (RGW), aspartate 1069, and tyrosine 1071 contribute to the S-adenosyl-L-methionine site. Positions 1086–1097 (EGYESEVDHSDP) are enriched in basic and acidic residues. The interval 1086–1148 (EGYESEVDHS…QSSELDSQER (63 aa)) is disordered. A compositionally biased stretch (acidic residues) spans 1098 to 1113 (DAEEDNGGPDAEDDDD). Residues 1129 to 1141 (RSGSTQNSSTQSS) are compositionally biased toward low complexity. Residues arginine 1191 and 1194-1195 (NH) each bind S-adenosyl-L-methionine. Residues cysteine 1197, cysteine 1250, cysteine 1252, and cysteine 1257 each contribute to the Zn(2+) site. Residues 1246–1262 (KVLYCQCGAPNCRLRLL) enclose the Post-SET domain.

It belongs to the class V-like SAM-binding methyltransferase superfamily. Histone-lysine methyltransferase family. Suvar3-9 subfamily. As to expression, expressed in ovary (at protein level).

Its subcellular location is the nucleus. The protein localises to the chromosome. It carries out the reaction L-lysyl(9)-[histone H3] + 3 S-adenosyl-L-methionine = N(6),N(6),N(6)-trimethyl-L-lysyl(9)-[histone H3] + 3 S-adenosyl-L-homocysteine + 3 H(+). In terms of biological role, histone methyltransferase that specifically trimethylates 'Lys-10' of histone H3 (H3K9me3) in ovary. H3K9me3 represents a specific tag for epigenetic transcriptional repression by recruiting Su(var)205/HP1 to methylated histones. Plays a central role during oogenesis. This chain is Histone-lysine N-methyltransferase eggless (egg), found in Drosophila melanogaster (Fruit fly).